A 364-amino-acid chain; its full sequence is UDP-N-acetylglucosamine--N-acetylmuramyl-(pentapeptide) pyrophosphoryl-undecaprenol N-acetylglucosamine transferase (364 aa).

Residues 10–12 (TGG), Asn124, Arg165, Ser193, Ile248, and Gln293 contribute to the UDP-N-acetyl-alpha-D-glucosamine site.

This sequence belongs to the glycosyltransferase 28 family. MurG subfamily.

It is found in the cell inner membrane. It catalyses the reaction di-trans,octa-cis-undecaprenyl diphospho-N-acetyl-alpha-D-muramoyl-L-alanyl-D-glutamyl-meso-2,6-diaminopimeloyl-D-alanyl-D-alanine + UDP-N-acetyl-alpha-D-glucosamine = di-trans,octa-cis-undecaprenyl diphospho-[N-acetyl-alpha-D-glucosaminyl-(1-&gt;4)]-N-acetyl-alpha-D-muramoyl-L-alanyl-D-glutamyl-meso-2,6-diaminopimeloyl-D-alanyl-D-alanine + UDP + H(+). It participates in cell wall biogenesis; peptidoglycan biosynthesis. Its function is as follows. Cell wall formation. Catalyzes the transfer of a GlcNAc subunit on undecaprenyl-pyrophosphoryl-MurNAc-pentapeptide (lipid intermediate I) to form undecaprenyl-pyrophosphoryl-MurNAc-(pentapeptide)GlcNAc (lipid intermediate II). The polypeptide is UDP-N-acetylglucosamine--N-acetylmuramyl-(pentapeptide) pyrophosphoryl-undecaprenol N-acetylglucosamine transferase (Geobacter sulfurreducens (strain ATCC 51573 / DSM 12127 / PCA)).